The primary structure comprises 174 residues: Probable adenylyl-sulfate kinase (174 aa).

ATP is bound at residue 10–17 (GPSGAGKT). Ser-84 serves as the catalytic Phosphoserine intermediate.

Belongs to the APS kinase family.

The enzyme catalyses adenosine 5'-phosphosulfate + ATP = 3'-phosphoadenylyl sulfate + ADP + H(+). It functions in the pathway sulfur metabolism; hydrogen sulfide biosynthesis; sulfite from sulfate: step 2/3. Functionally, catalyzes the synthesis of activated sulfate. This chain is Probable adenylyl-sulfate kinase (cysC), found in Pyrococcus abyssi (strain GE5 / Orsay).